The primary structure comprises 81 residues: Sulfur carrier protein TusA (81 aa).

The active-site Cysteine persulfide intermediate is Cys19.

The protein belongs to the sulfur carrier protein TusA family. Interacts with IscS.

It is found in the cytoplasm. It functions in the pathway tRNA modification. Sulfur carrier protein involved in sulfur trafficking in the cell. Part of a sulfur-relay system required for 2-thiolation during synthesis of 2-thiouridine of the modified wobble base 5-methylaminomethyl-2-thiouridine (mnm(5)s(2)U) in tRNA. Interacts with IscS and stimulates its cysteine desulfurase activity. Accepts an activated sulfur from IscS, which is then transferred to TusD, and thus determines the direction of sulfur flow from IscS to 2-thiouridine formation. Also appears to be involved in sulfur transfer for the biosynthesis of molybdopterin. This is Sulfur carrier protein TusA from Serratia proteamaculans (strain 568).